A 657-amino-acid polypeptide reads, in one-letter code: UvrABC system protein B (657 aa).

The Helicase ATP-binding domain occupies 23–414; the sequence is KSIKKGNKYQ…KENIFHQIMR (392 aa). ATP is bound at residue 36 to 43; the sequence is GVTGSGKT. The short motif at 89-112 is the Beta-hairpin element; it reads YYDYYQPEAYIPRTDVFIEKDSST. A Helicase C-terminal domain is found at 431–593; that stretch reads QVEILFDEAK…ITPTSVKRHI (163 aa). One can recognise a UVR domain in the interval 622–657; it reads AKLVKELRKQMLEAAKALEFEKAAAIRDEINKLRDL.

This sequence belongs to the UvrB family. As to quaternary structure, forms a heterotetramer with UvrA during the search for lesions. Interacts with UvrC in an incision complex.

It is found in the cytoplasm. The UvrABC repair system catalyzes the recognition and processing of DNA lesions. A damage recognition complex composed of 2 UvrA and 2 UvrB subunits scans DNA for abnormalities. Upon binding of the UvrA(2)B(2) complex to a putative damaged site, the DNA wraps around one UvrB monomer. DNA wrap is dependent on ATP binding by UvrB and probably causes local melting of the DNA helix, facilitating insertion of UvrB beta-hairpin between the DNA strands. Then UvrB probes one DNA strand for the presence of a lesion. If a lesion is found the UvrA subunits dissociate and the UvrB-DNA preincision complex is formed. This complex is subsequently bound by UvrC and the second UvrB is released. If no lesion is found, the DNA wraps around the other UvrB subunit that will check the other stand for damage. This chain is UvrABC system protein B, found in Campylobacter jejuni subsp. jejuni serotype O:2 (strain ATCC 700819 / NCTC 11168).